We begin with the raw amino-acid sequence, 97 residues long: Small ribosomal subunit protein bS6 (97 aa).

This sequence belongs to the bacterial ribosomal protein bS6 family.

In terms of biological role, binds together with bS18 to 16S ribosomal RNA. The chain is Small ribosomal subunit protein bS6 from Bifidobacterium longum (strain NCC 2705).